A 542-amino-acid chain; its full sequence is GMP synthase [glutamine-hydrolyzing] (542 aa).

The 191-residue stretch at 28–218 folds into the Glutamine amidotransferase type-1 domain; sequence MLVILDFGSQ…VYHICQCEPT (191 aa). The Nucleophile role is filled by Cys105. Residues His192 and Glu194 contribute to the active site. The GMPS ATP-PPase domain maps to 219 to 417; it reads WTTEAFVEES…IGLPEEIVRR (199 aa). An ATP-binding site is contributed by 246-252; it reads SGGVDSS.

In terms of assembly, homodimer.

It catalyses the reaction XMP + L-glutamine + ATP + H2O = GMP + L-glutamate + AMP + diphosphate + 2 H(+). Its pathway is purine metabolism; GMP biosynthesis; GMP from XMP (L-Gln route): step 1/1. Functionally, catalyzes the synthesis of GMP from XMP. The chain is GMP synthase [glutamine-hydrolyzing] from Rippkaea orientalis (strain PCC 8801 / RF-1) (Cyanothece sp. (strain PCC 8801)).